Reading from the N-terminus, the 133-residue chain is Large ribosomal subunit protein uL16c (133 aa).

It belongs to the universal ribosomal protein uL16 family. As to quaternary structure, part of the 50S ribosomal subunit.

Its subcellular location is the plastid. The protein resides in the chloroplast. This is Large ribosomal subunit protein uL16c from Liriodendron tulipifera (Tuliptree).